A 252-amino-acid chain; its full sequence is Trans-aconitate 2-methyltransferase (252 aa).

The protein belongs to the methyltransferase superfamily. Tam family.

The protein localises to the cytoplasm. It carries out the reaction trans-aconitate + S-adenosyl-L-methionine = (E)-3-(methoxycarbonyl)pent-2-enedioate + S-adenosyl-L-homocysteine. In terms of biological role, catalyzes the S-adenosylmethionine monomethyl esterification of trans-aconitate. The protein is Trans-aconitate 2-methyltransferase of Shigella dysenteriae serotype 1 (strain Sd197).